Reading from the N-terminus, the 503-residue chain is Maturase K (503 aa).

Belongs to the intron maturase 2 family. MatK subfamily.

It is found in the plastid. Its subcellular location is the chloroplast. In terms of biological role, usually encoded in the trnK tRNA gene intron. Probably assists in splicing its own and other chloroplast group II introns. The chain is Maturase K from Rosa californica (California wild rose).